Reading from the N-terminus, the 254-residue chain is Thiazole synthase (254 aa).

Catalysis depends on lysine 96, which acts as the Schiff-base intermediate with DXP. 1-deoxy-D-xylulose 5-phosphate-binding positions include glycine 157, 183–184, and 205–206; these read AG and NT.

This sequence belongs to the ThiG family. As to quaternary structure, homotetramer. Forms heterodimers with either ThiH or ThiS.

Its subcellular location is the cytoplasm. It carries out the reaction [ThiS sulfur-carrier protein]-C-terminal-Gly-aminoethanethioate + 2-iminoacetate + 1-deoxy-D-xylulose 5-phosphate = [ThiS sulfur-carrier protein]-C-terminal Gly-Gly + 2-[(2R,5Z)-2-carboxy-4-methylthiazol-5(2H)-ylidene]ethyl phosphate + 2 H2O + H(+). It functions in the pathway cofactor biosynthesis; thiamine diphosphate biosynthesis. Its function is as follows. Catalyzes the rearrangement of 1-deoxy-D-xylulose 5-phosphate (DXP) to produce the thiazole phosphate moiety of thiamine. Sulfur is provided by the thiocarboxylate moiety of the carrier protein ThiS. In vitro, sulfur can be provided by H(2)S. The sequence is that of Thiazole synthase from Bacillus velezensis (strain DSM 23117 / BGSC 10A6 / LMG 26770 / FZB42) (Bacillus amyloliquefaciens subsp. plantarum).